The following is a 505-amino-acid chain: DEAD-box ATP-dependent RNA helicase 8 (505 aa).

A disordered region spans residues Met1–Gly85. Positions Pro20–Gln31 are enriched in polar residues. Residues Asn43–Gln71 show a composition bias toward low complexity. Positions Asn131–Glu159 match the Q motif motif. The region spanning Ile162–Ile332 is the Helicase ATP-binding domain. ATP is bound at residue Ala175–Thr182. A Phosphothreonine modification is found at Thr237. Residues Asp280–Asp283 carry the DEAD box motif. The Helicase C-terminal domain occupies Gly342–Ile502.

Belongs to the DEAD box helicase family. DDX6/DHH1 subfamily.

It localises to the cytoplasm. The protein resides in the P-body. It carries out the reaction ATP + H2O = ADP + phosphate + H(+). Functionally, ATP-dependent RNA helicase involved in mRNA turnover, and more specifically in mRNA decapping. The polypeptide is DEAD-box ATP-dependent RNA helicase 8 (RH8) (Arabidopsis thaliana (Mouse-ear cress)).